We begin with the raw amino-acid sequence, 300 residues long: Glycine--tRNA ligase alpha subunit (300 aa).

This sequence belongs to the class-II aminoacyl-tRNA synthetase family. Tetramer of two alpha and two beta subunits.

The protein resides in the cytoplasm. It catalyses the reaction tRNA(Gly) + glycine + ATP = glycyl-tRNA(Gly) + AMP + diphosphate. The chain is Glycine--tRNA ligase alpha subunit from Prochlorococcus marinus (strain MIT 9313).